We begin with the raw amino-acid sequence, 383 residues long: F-box/kelch-repeat protein At4g19330 (383 aa).

Residues 1-27 (MAYLSFKSNMERTPRESNTPCPPPQPS) form a disordered region. In terms of domain architecture, F-box spans 28-79 (PSLFSSLPDDIVLNILARISTSYYQTLSLVSKTFRLLILSKELDMERSYLGT). Kelch repeat units follow at residues 147–192 (ETYE…VLDG), 193–239 (KLYV…NIQT), and 272–318 (STCE…SEIG).

In terms of biological role, involved in seed germination. The polypeptide is F-box/kelch-repeat protein At4g19330 (Arabidopsis thaliana (Mouse-ear cress)).